A 366-amino-acid polypeptide reads, in one-letter code: Glutamate 5-kinase (366 aa).

Lysine 17 contributes to the ATP binding site. Substrate-binding residues include serine 57, aspartate 144, and asparagine 156. Residues 176–177 and 216–222 contribute to the ATP site; these read SD and TGGMASK. The 75-residue stretch at 278–352 folds into the PUA domain; the sequence is RGALVLDDGA…GRSTTELPDT (75 aa).

The protein belongs to the glutamate 5-kinase family.

Its subcellular location is the cytoplasm. The enzyme catalyses L-glutamate + ATP = L-glutamyl 5-phosphate + ADP. It functions in the pathway amino-acid biosynthesis; L-proline biosynthesis; L-glutamate 5-semialdehyde from L-glutamate: step 1/2. In terms of biological role, catalyzes the transfer of a phosphate group to glutamate to form L-glutamate 5-phosphate. The sequence is that of Glutamate 5-kinase from Nocardia farcinica (strain IFM 10152).